The following is a 596-amino-acid chain: Pentatricopeptide repeat-containing protein At1g80270, mitochondrial (596 aa).

The transit peptide at 1–69 (MFALSKVLRR…RALSSSAGTK (69 aa)) directs the protein to the mitochondrion. The interval 62 to 119 (LSSSAGTKSDQEEDDLEDGFSELEGSKSGQGSTSSDEDEGKLSADEEEEEELDLIETD) is disordered. Acidic residues-rich tracts occupy residues 72–82 (QEEDDLEDGFS) and 96–117 (SDED…DLIE). PPR repeat units follow at residues 228–262 (GEVL…GFPL), 263–296 (SGFT…NIKP), 297–331 (SLLT…GVEL), 332–366 (DFQT…SLEA), 367–397 (NRRA…CESK), 399–433 (YFEE…DRRA), 434–468 (SSST…GCRI), 469–503 (EATT…SHTK), and 505–539 (MMNS…GYTS).

This sequence belongs to the PPR family. P subfamily.

It localises to the mitochondrion. This Arabidopsis thaliana (Mouse-ear cress) protein is Pentatricopeptide repeat-containing protein At1g80270, mitochondrial.